Here is a 101-residue protein sequence, read N- to C-terminus: Chaperone modulatory protein CbpM (101 aa).

Belongs to the CbpM family.

Its function is as follows. Interacts with CbpA and inhibits both the DnaJ-like co-chaperone activity and the DNA binding activity of CbpA. Together with CbpA, modulates the activity of the DnaK chaperone system. Does not inhibit the co-chaperone activity of DnaJ. In Citrobacter koseri (strain ATCC BAA-895 / CDC 4225-83 / SGSC4696), this protein is Chaperone modulatory protein CbpM.